A 5084-amino-acid chain; its full sequence is Apicidin F synthase (5084 aa).

The tract at residues 209 to 606 (ARILQRQPDK…VGRLDSQVKL (398 aa)) is adenylation 1. Residues 731–808 (HETDNCQRLL…EAASSMREVV (78 aa)) enclose the Carrier 1 domain. Ser-768 is subject to O-(pantetheine 4'-phosphoryl)serine. 2 condensation regions span residues 822-1124 (YPLS…FPIY) and 1309-1609 (EIYC…SILV). An adenylation 2 region spans residues 1788-2192 (EDPTREAVFS…IGRKDNQIKI (405 aa)). Residues 2341–2415 (VVKDDPVSEL…DMAKGMAPLS (75 aa)) form the Carrier 2 domain. Ser-2376 bears the O-(pantetheine 4'-phosphoryl)serine mark. A disordered region spans residues 2415–2441 (SLTAPESTSSSSPQSFSTSTSTTIIEN). Low complexity predominate over residues 2421–2437 (STSSSSPQSFSTSTSTT). The tract at residues 2478-2755 (EDIFPCTPMQ…IVTLPRQLNI (278 aa)) is condensation 3. Positions 2935–3328 (RNNPRARAVV…GRRDGQIKLR (394 aa)) are adenylation 3. The 77-residue stretch at 3463 to 3539 (ETWSSSEAIV…DMASRLSRPE (77 aa)) folds into the Carrier 3 domain. At Ser-3500 the chain carries O-(pantetheine 4'-phosphoryl)serine. The segment at 3581–3866 (EDIYPCTPLQ…IATVPSRTTI (286 aa)) is condensation 4. Residues 4029–4426 (RKQVELSPSH…TVSWIGRKDH (398 aa)) form an adenylation 4 region. The Carrier 4 domain maps to 4554 to 4631 (ALKTPKERLL…DMADLLGPLR (78 aa)). Ser-4592 is subject to O-(pantetheine 4'-phosphoryl)serine. The interval 4669–4948 (EQIYPCTAYQ…ISKLPLRIQL (280 aa)) is condensation 5.

Belongs to the NRP synthetase family.

Its pathway is secondary metabolite biosynthesis. Its function is as follows. Non-ribosomal peptide synthetase; part of the gene cluster that mediates the biosynthesis of the cyclic tetrapeptide apicidin F (APF). The non-ribosomal peptide synthetase apf1 incorporates four different amino acids to produce apicidin F: L-phenylalanine, D-pipecolic acid (D-pip), N-methoxy-L-tryptophan and L-2-aminooctanedioic acid. L-Phenylalanine is the only proteinogenic amino acid directly used by apf1. The 3 other apf1 substrates are non-proteinogenic and have to be modified by other enzymes of the cluster. Lysine is converted to delta-1-pyrroline-5-carboxylate (P5C) which is reduced to L-pipecolic acid (L-pip) by apf3. L-pip is epimerized to D-pip, probably by apf1 activity, prior to incorporation. L-Tryptophan is N-oxidyzed by one of the cytochrome P450 monooxygenases (apf7 or apf8), and further methylated at the hydroxy group by the O-methyltransferase apf6 to yield N-methoxy-L-tryptophan. The synthesis of the fourth apf1 substrate is more complex. The fatty acid synthase apf5 is involved in the synthesis of the octanoic acid backbone of L-2-aminooctanedioic acid by fixing one acetyl-CoA unit and three malonyl-CoA units. Then one of the cytochrome P450 monooxygenases (apf7 or apf8) may oxidize this backbone to 2-oxooctanoic acid. The aminotransferase apf4 is predicted to catalyze the exchange of the keto group with an amino group. The next step would be the oxidation of 2-aminooctanoic acid by one of the cytochrome P450 monooxygenases (apf7 or apf8). The last step is the oxidation of 2-amino-8-hydroxyoctanoic acid to 2-aminooctanedioic acid is catalyzed by the FAD-dependent monooxygenase apf9. This Gibberella fujikuroi (strain CBS 195.34 / IMI 58289 / NRRL A-6831) (Bakanae and foot rot disease fungus) protein is Apicidin F synthase.